A 330-amino-acid chain; its full sequence is Glycine betaine/proline betaine-binding periplasmic protein (330 aa).

The first 21 residues, 1 to 21 (MRHSVLFATAFATLISTQTFA), serve as a signal peptide directing secretion. Substrate contacts are provided by residues W86, H90, and 161 to 163 (WGC). C157 and C163 are disulfide-bonded.

As to quaternary structure, the complex is composed of two ATP-binding proteins (ProV), two transmembrane proteins (ProW) and a solute-binding protein (ProX).

It is found in the periplasm. In terms of biological role, part of the ProU ABC transporter complex involved in glycine betaine and proline betaine uptake. Binds glycine betaine and proline betaine with high affinity. In Escherichia coli (strain K12), this protein is Glycine betaine/proline betaine-binding periplasmic protein.